The primary structure comprises 323 residues: Breast cancer metastasis-suppressor 1-like protein (323 aa).

Positions 1–17 are enriched in basic and acidic residues; sequence MPVHSRGDKKETNHHDE. A disordered region spans residues 1 to 56; it reads MPVHSRGDKKETNHHDEMEVDYAENEGSSSEDEDTESSSVSEDGDSSEMDDEDCER. Residues 18–53 show a composition bias toward acidic residues; sequence MEVDYAENEGSSSEDEDTESSSVSEDGDSSEMDDED. Coiled-coil stretches lie at residues 52 to 84 and 149 to 180; these read EDCE…KERL and EKLL…ITSE. Serine 197 is modified (phosphoserine). Residues lysine 240 and lysine 246 each participate in a glycyl lysine isopeptide (Lys-Gly) (interchain with G-Cter in SUMO2) cross-link.

It belongs to the BRMS1 family. Component of the Sin3/HDAC1 corepressor complex at least composed of BRMS1, BRMS1L and ING2/ING1L. Interacts with HDAC and SIN3A.

It localises to the nucleus. Its function is as follows. Involved in the histone deacetylase (HDAC1)-dependent transcriptional repression activity. When overexpressed in lung cancer cell line that lacks p53/TP53 expression, inhibits cell growth. The sequence is that of Breast cancer metastasis-suppressor 1-like protein (BRMS1L) from Bos taurus (Bovine).